Here is a 204-residue protein sequence, read N- to C-terminus: MSTVVLRSNGNGSRRRRQRVARRRPAARTQPVVVVASNGPARRGRRRRPVGPRRGRTPRSGGGSRGETFVFSKDSLAGNSSGSITFGPSLSEYPAFQNGVLKAYHEYKITNCVLQFVSEASSTAAGSISYELDPHCKASSLASTINKFTITKTGARSFPAKMINGLEWHPSDEDQFRILYKGNGASSVAGSFKITLRVQLQNPK.

Positions 1–12 (MSTVVLRSNGNG) are enriched in polar residues. The tract at residues 1–74 (MSTVVLRSNG…RGETFVFSKD (74 aa)) is disordered. Over residues 13 to 26 (SRRRRQRVARRRPA) the composition is skewed to basic residues. Positions 27-41 (ARTQPVVVVASNGPA) are enriched in low complexity. The span at 42 to 57 (RRGRRRRPVGPRRGRT) shows a compositional bias: basic residues.

Belongs to the luteoviruses capsid protein family.

It localises to the virion. In terms of biological role, major capsid protein. This Avena byzantina (Oat) protein is Major capsid protein.